The primary structure comprises 569 residues: Urease subunit alpha (569 aa).

The region spanning 131–569 (GGFDSHIHFI…LPMAQRYFLF (439 aa)) is the Urease domain. The Ni(2+) site is built by H136, H138, and K219. K219 bears the N6-carboxylysine mark. Residue H221 participates in substrate binding. Residues H248 and H274 each coordinate Ni(2+). Catalysis depends on H322, which acts as the Proton donor. D362 lines the Ni(2+) pocket.

This sequence belongs to the metallo-dependent hydrolases superfamily. Urease alpha subunit family. As to quaternary structure, heterotrimer of UreA (gamma), UreB (beta) and UreC (alpha) subunits. Three heterotrimers associate to form the active enzyme. It depends on Ni cation as a cofactor. In terms of processing, carboxylation allows a single lysine to coordinate two nickel ions.

The protein localises to the cytoplasm. It carries out the reaction urea + 2 H2O + H(+) = hydrogencarbonate + 2 NH4(+). It functions in the pathway nitrogen metabolism; urea degradation; CO(2) and NH(3) from urea (urease route): step 1/1. The chain is Urease subunit alpha from Roseobacter denitrificans (strain ATCC 33942 / OCh 114) (Erythrobacter sp. (strain OCh 114)).